The sequence spans 64 residues: uncharacterized protein (64 aa).

This is an uncharacterized protein from Escherichia coli (strain K12).